A 285-amino-acid chain; its full sequence is MSSAIYLENYLDGLESLPTELERNFKLMRKLDDRAQTAMKSIDSHAKDFMRKLGENGAMSEDERRERQEDIKALFGKAKEYSDDKVQLAIQTYELVDKQIRRLDNDLARFEGEIQEKASSTRAKSEEVVAKKGRKKTKDSKTTGKKKKSASSDEETGRGNNQSNANSSVNSSSNAGQGSKKKKSKVNQEKETRKGGAQKKTVEVDDSEKESCHTAATHPSDVMDMPVDPNEPTYCLCHQVSYGEMIGCDNPDCPIEWFHFACVGLTTKPKGKWFCPKCTQDRKKK.

The tract at residues 116–225 is disordered; that stretch reads EKASSTRAKS…ATHPSDVMDM (110 aa). Residues 131 to 149 show a composition bias toward basic residues; sequence KKGRKKTKDSKTTGKKKKS. Low complexity predominate over residues 160–178; that stretch reads NNQSNANSSVNSSSNAGQG. A PHD-type zinc finger spans residues 232–281; the sequence is PTYCLCHQVSYGEMIGCDNPDCPIEWFHFACVGLTTKPKGKWFCPKCTQD. Residues C235, C237, C248, C253, H259, C262, C275, and C278 each contribute to the Zn(2+) site.

Belongs to the ING family. As to quaternary structure, component of the Enok complex composed of at least Br140, enok, Eaf6 and Ing5.

It localises to the nucleus. The protein localises to the chromosome. Component of the Enok complex which has a histone H3 acetyltransferase activity. This is Inhibitor of growth protein 5 from Drosophila melanogaster (Fruit fly).